We begin with the raw amino-acid sequence, 89 residues long: Small ribosomal subunit protein uS17A (89 aa).

This sequence belongs to the universal ribosomal protein uS17 family. Part of the 30S ribosomal subunit.

Functionally, one of the primary rRNA binding proteins, it binds specifically to the 5'-end of 16S ribosomal RNA. The protein is Small ribosomal subunit protein uS17A of Bacteroides thetaiotaomicron (strain ATCC 29148 / DSM 2079 / JCM 5827 / CCUG 10774 / NCTC 10582 / VPI-5482 / E50).